The sequence spans 472 residues: 3-isopropylmalate dehydratase large subunit (472 aa).

C347, C409, and C412 together coordinate [4Fe-4S] cluster.

Belongs to the aconitase/IPM isomerase family. LeuC type 1 subfamily. As to quaternary structure, heterodimer of LeuC and LeuD. Requires [4Fe-4S] cluster as cofactor.

The enzyme catalyses (2R,3S)-3-isopropylmalate = (2S)-2-isopropylmalate. Its pathway is amino-acid biosynthesis; L-leucine biosynthesis; L-leucine from 3-methyl-2-oxobutanoate: step 2/4. Its function is as follows. Catalyzes the isomerization between 2-isopropylmalate and 3-isopropylmalate, via the formation of 2-isopropylmaleate. The chain is 3-isopropylmalate dehydratase large subunit from Salinibacter ruber (strain DSM 13855 / M31).